The following is a 575-amino-acid chain: Hemagglutinin-neuraminidase (575 aa).

Positions 1 to 10 (MDGDRGKRDS) are enriched in basic and acidic residues. The tract at residues 1 to 27 (MDGDRGKRDSYWSTSPSGSTTKPASGW) is disordered. Residues 1–37 (MDGDRGKRDSYWSTSPSGSTTKPASGWERSSKADTWL) lie on the Intravirion side of the membrane. The interval 10–14 (SYWST) is incorporation in virion. Positions 11 to 23 (YWSTSPSGSTTKP) are enriched in polar residues. A helical; Signal-anchor for type II membrane protein membrane pass occupies residues 38–58 (LILSFTQWALSIATVIICIII). The tract at residues 59 to 140 (SARQGYSMKE…RQELTQHCES (82 aa)) is interaction with F protein. At 59-575 (SARQGYSMKE…SIPKLCKAES (517 aa)) the chain is on the virion surface side. Residue asparagine 77 is glycosylated (N-linked (GlcNAc...) asparagine; by host). 4 cysteine pairs are disulfide-bonded: cysteine 192–cysteine 216, cysteine 258–cysteine 271, cysteine 357–cysteine 469, and cysteine 463–cysteine 473. The tract at residues 254–259 (NRKSCS) is involved in neuraminidase activity. 2 N-linked (GlcNAc...) asparagine; by host glycosylation sites follow: asparagine 499 and asparagine 511. A disulfide bridge connects residues cysteine 535 and cysteine 544.

It belongs to the paramyxoviruses hemagglutinin-neuraminidase family. In terms of assembly, homotetramer; composed of disulfide-linked homodimers. Interacts with F protein trimer. N-glycosylated; glycans consist of a mixture of high mannose-type oligosaccharides and of complex-type oligosaccharides.

Its subcellular location is the virion membrane. It localises to the host cell membrane. The catalysed reaction is Hydrolysis of alpha-(2-&gt;3)-, alpha-(2-&gt;6)-, alpha-(2-&gt;8)- glycosidic linkages of terminal sialic acid residues in oligosaccharides, glycoproteins, glycolipids, colominic acid and synthetic substrates.. Attaches the virus to sialic acid-containing cell receptors and thereby initiating infection. Binding of HN protein to the receptor induces a conformational change that allows the F protein to trigger virion/cell membranes fusion. Functionally, neuraminidase activity ensures the efficient spread of the virus by dissociating the mature virions from the neuraminic acid containing glycoproteins. This is Hemagglutinin-neuraminidase (HN) from Sendai virus (strain Z) (SeV).